A 1146-amino-acid polypeptide reads, in one-letter code: Killer toxin subunits alpha/beta (1146 aa).

The N-terminal stretch at 1–17 (MNIFYIFLFLLSFVQGL) is a signal peptide. The propeptide occupies 18-29 (EHTHRRGSLVKR). LysM domains follow at residues 205-234 (ADQS…QPIC) and 254-303 (KTYK…NLCV). Residues 316–372 (IAECGPLAPGEKYNAKCPLNACCSEFGFCGLTKDYCDKKSSTTGAPGTDGCFSNCGY) form the Chitin-binding type-1 domain. 4 cysteine pairs are disulfide-bonded: cysteine 319-cysteine 338, cysteine 332-cysteine 344, cysteine 337-cysteine 351, and cysteine 366-cysteine 370. A GH18 domain is found at 383 to 735 (FKKIAYWLDA…DDTEDPFDEE (353 aa)). Chitin contacts are provided by residues isoleucine 424 and 447–450 (GGWD). Glutamate 495 (proton donor) is an active-site residue. Residues tyrosine 496, 562-565 (MTYD), and tryptophan 707 contribute to the chitin site. 5 N-linked (GlcNAc...) asparagine glycosylation sites follow: asparagine 771, asparagine 858, asparagine 868, asparagine 876, and asparagine 1117.

Belongs to the glycosyl hydrolase 18 family. In terms of assembly, the killer toxin is composed of three subunits: alpha, beta and gamma. Post-translationally, RF2 is potentially split by membrane-bound basic amino acid-specific peptidase to yield the alpha and beta subunits.

The catalysed reaction is Random endo-hydrolysis of N-acetyl-beta-D-glucosaminide (1-&gt;4)-beta-linkages in chitin and chitodextrins.. Functionally, the alpha subunit is a potent exochitinase. Along with the beta subunit it plays a role in the initial interaction of the toxin with sensitive cells and allow the gamma subunit (the active toxin) to gain entry into the cell. This is Killer toxin subunits alpha/beta from Kluyveromyces lactis (strain ATCC 8585 / CBS 2359 / DSM 70799 / NBRC 1267 / NRRL Y-1140 / WM37) (Yeast).